Reading from the N-terminus, the 435-residue chain is Trigger factor (435 aa).

Residues 163-248 form the PPIase FKBP-type domain; it reads GDRVTIDFEG…LTRIEAQNLP (86 aa).

Belongs to the FKBP-type PPIase family. Tig subfamily.

Its subcellular location is the cytoplasm. The catalysed reaction is [protein]-peptidylproline (omega=180) = [protein]-peptidylproline (omega=0). Functionally, involved in protein export. Acts as a chaperone by maintaining the newly synthesized protein in an open conformation. Functions as a peptidyl-prolyl cis-trans isomerase. The protein is Trigger factor of Leptothrix cholodnii (strain ATCC 51168 / LMG 8142 / SP-6) (Leptothrix discophora (strain SP-6)).